Reading from the N-terminus, the 123-residue chain is Galanin peptides (123 aa).

Residues 1–19 (MARGSALLLASLLLAAALS) form the signal peptide. A propeptide spanning residues 20–30 (ASAGLWSPAKE) is cleaved from the precursor. A disordered region spans residues 46 to 80 (HAVGNHRSFSDKNGLTSKRELRPEDDMKPGSFDRS). A compositionally biased stretch (basic and acidic residues) spans 62 to 73 (SKRELRPEDDMK). Ser-116 and Ser-117 each carry phosphoserine.

It belongs to the galanin family.

It localises to the secreted. Endocrine hormone of the central and peripheral nervous systems that binds and activates the G protein-coupled receptors GALR1, GALR2, and GALR3. This small neuropeptide may regulate diverse physiologic functions including contraction of smooth muscle of the gastrointestinal and genitourinary tract, growth hormone and insulin release and adrenal secretion. The chain is Galanin peptides (GAL) from Homo sapiens (Human).